The following is a 418-amino-acid chain: Inner capsid protein sigma-2 (418 aa).

Belongs to the orthoreovirus sigma-1 protein family. In terms of assembly, interacts with protein mu-NS; in viral inclusions.

It localises to the virion. In terms of biological role, inner capsid (core) component. This chain is Inner capsid protein sigma-2 (S2), found in Mammalia (T1L).